A 60-amino-acid polypeptide reads, in one-letter code: Metallothionein (60 aa).

N-acetylmethionine is present on Met1. The tract at residues 1 to 28 is beta; that stretch reads MDPCECSKTGTCNCGGSCTCKNCSCTTC. A divalent metal cation is bound by residues Cys4, Cys6, Cys12, Cys14, Cys18, Cys20, Cys23, Cys25, Cys28, Cys32, Cys33, Cys35, Cys36, Cys40, Cys43, Cys47, Cys49, Cys54, Cys58, and Cys59. Positions 29-60 are alpha; sequence TKSCCPCCPSGCPKCASGCVCKGKTCDTTCCQ.

It belongs to the metallothionein superfamily. Type 1 family.

Its function is as follows. Metallothioneins have a high content of cysteine residues that bind various heavy metals. This Pseudopleuronectes americanus (Winter flounder) protein is Metallothionein (mt).